A 556-amino-acid chain; its full sequence is Arginine--tRNA ligase (556 aa).

The 'HIGH' region motif lies at 132 to 142 (VNPTGDLHLGH).

This sequence belongs to the class-I aminoacyl-tRNA synthetase family. In terms of assembly, monomer.

It localises to the cytoplasm. It catalyses the reaction tRNA(Arg) + L-arginine + ATP = L-arginyl-tRNA(Arg) + AMP + diphosphate. The sequence is that of Arginine--tRNA ligase from Oceanobacillus iheyensis (strain DSM 14371 / CIP 107618 / JCM 11309 / KCTC 3954 / HTE831).